A 146-amino-acid chain; its full sequence is Hemoglobin subunit beta (146 aa).

The 145-residue stretch at Q2–H146 folds into the Globin domain. H63 and H92 together coordinate heme b.

It belongs to the globin family. As to quaternary structure, heterotetramer of two alpha chains and two beta chains. Red blood cells.

Functionally, involved in oxygen transport from the lung to the various peripheral tissues. The chain is Hemoglobin subunit beta (HBB) from Sturnus vulgaris (Starling).